Reading from the N-terminus, the 676-residue chain is tRNA uridine 5-carboxymethylaminomethyl modification enzyme MnmG (676 aa).

15-20 (GAGHAG) contributes to the FAD binding site. 316–330 (GPRYCPSIEDKIVRF) lines the NAD(+) pocket.

It belongs to the MnmG family. In terms of assembly, homodimer. Heterotetramer of two MnmE and two MnmG subunits. FAD serves as cofactor.

Its subcellular location is the cytoplasm. In terms of biological role, NAD-binding protein involved in the addition of a carboxymethylaminomethyl (cmnm) group at the wobble position (U34) of certain tRNAs, forming tRNA-cmnm(5)s(2)U34. This Roseiflexus castenholzii (strain DSM 13941 / HLO8) protein is tRNA uridine 5-carboxymethylaminomethyl modification enzyme MnmG.